Consider the following 57-residue polypeptide: Probable mRNA interferase HicA 1 (57 aa).

This sequence belongs to the HicA mRNA interferase family. Probably forms a complex with the cognate antitoxin HicB 1 which inhibits the mRNA interferase activity.

In terms of biological role, toxic component of a type II toxin-antitoxin (TA) system. A probable translation-independent mRNA interferase. In Photorhabdus laumondii subsp. laumondii (strain DSM 15139 / CIP 105565 / TT01) (Photorhabdus luminescens subsp. laumondii), this protein is Probable mRNA interferase HicA 1 (hicA1).